Consider the following 172-residue polypeptide: uncharacterized protein (172 aa).

This sequence belongs to the flavoredoxin family. FMN serves as cofactor.

This is an uncharacterized protein from Pyrococcus abyssi (strain GE5 / Orsay).